The sequence spans 266 residues: MSADSEFDATDYIQHHLTNLRLDLTEGTIDSEATGFWTLHIDTLIMSFGLGALFCYVFWLAARQATPGVPGGLQNFVEAMIEFIDKTVKETFHAKSKVIAPLALTIFCWVFLSNLMDLVPIDMVPSIMMAVGVDYWKILPSVDLNFTFGLSLSVLALIIIYGVMGQGVGGWLKSWVTHPLGPWLAPANLILNIVEFIAKPVSLSLRLFGNLYAAELVFILISLLPWWIQWALGTPWAIFHILVVPLQAFIFMMLTVVYLAMAYEEH.

7 consecutive transmembrane segments (helical) span residues 41 to 61, 98 to 118, 119 to 139, 152 to 172, 178 to 198, 216 to 236, and 237 to 257; these read IDTLIMSFGLGALFCYVFWLA, VIAPLALTIFCWVFLSNLMDL, VPIDMVPSIMMAVGVDYWKIL, LSVLALIIIYGVMGQGVGGWL, HPLGPWLAPANLILNIVEFIA, LVFILISLLPWWIQWALGTPW, and AIFHILVVPLQAFIFMMLTVV.

This sequence belongs to the ATPase A chain family. F-type ATPases have 2 components, CF(1) - the catalytic core - and CF(0) - the membrane proton channel. CF(1) has five subunits: alpha(3), beta(3), gamma(1), delta(1), epsilon(1). CF(0) has three main subunits: a(1), b(2) and c(9-12). The alpha and beta chains form an alternating ring which encloses part of the gamma chain. CF(1) is attached to CF(0) by a central stalk formed by the gamma and epsilon chains, while a peripheral stalk is formed by the delta and b chains.

It is found in the cell inner membrane. Its function is as follows. Key component of the proton channel; it plays a direct role in the translocation of protons across the membrane. This is ATP synthase subunit a from Halorhodospira halophila (strain DSM 244 / SL1) (Ectothiorhodospira halophila (strain DSM 244 / SL1)).